The following is a 136-amino-acid chain: uncharacterized protein (136 aa).

It localises to the cytoplasm. The protein localises to the nucleus. This is an uncharacterized protein from Schizosaccharomyces pombe (strain 972 / ATCC 24843) (Fission yeast).